Consider the following 476-residue polypeptide: Transcription factor EB (476 aa).

Disordered stretches follow at residues 1–66 and 107–142; these read MASR…PPVP and HISP…APNS. An interaction with ACSS2 region spans residues 1 to 167; that stretch reads MASRIGLRMQ…DDVIDNIMRL (167 aa). Positions 26-44 are enriched in low complexity; it reads QQQAVMHYMQQQQQQQQQQ. A phosphoserine mark is found at serine 109, serine 114, serine 122, and serine 138. Over residues 132–142 the composition is skewed to low complexity; it reads SSSAGNSAPNS. The short motif at 136–153 is the Nuclear export signal element; that stretch reads GNSAPNSPMAMLHIGSNP. Phosphoserine; by MTOR is present on serine 142. Residues 156–165 are strong transcription activation domain; sequence ELDDVIDNIM. At threonine 183 the chain carries Phosphothreonine. Residue serine 211 is modified to Phosphoserine; by MTOR. Cysteine 212 bears the S-(2,3-dicarboxypropyl)cysteine mark. The region spanning 235–288 is the bHLH domain; the sequence is QKKDNHNLIERRRRFNINDRIKELGMLIPKANDLDVRWNKGTILKASVDYIRRM. A Nuclear localization signal motif is present at residues 245–248; that stretch reads RRRR. The tract at residues 298-319 is leucine-zipper; that stretch reads LENHSRRLEMTNKQLWLRIQEL. At serine 332 the chain carries Phosphoserine. Positions 349 to 430 are disordered; sequence ELPSEEGPGE…HGSPFPSLSK (82 aa). The segment covering 369-390 has biased composition (pro residues); sequence PEPLPALPPQAPLPLPTQPPSP. Serine 423, serine 441, serine 466, serine 467, and serine 469 each carry phosphoserine. Residues 447-469 show a composition bias toward low complexity; it reads SDPLLSTMSPEASKASSRRSSFS. The interval 447–476 is disordered; that stretch reads SDPLLSTMSPEASKASSRRSSFSMEEGDVL.

Belongs to the MiT/TFE family. In terms of assembly, homodimer and heterodimer; with TFE3 or MITF. Interacts (when phosphorylated by MTOR) with YWHAZ; promoting retention in the cytosol. Interacts with IRGM; promoting association between TFEB and PPP3CB and dephosphorylation. Interacts with small GTPases Rag (RagA/RRAGA, RagB/RRAGB, RagC/RRAGC and/or RagD/RRAGD); promoting its recruitment to lysosomal membrane in the presence of nutrients. Interacts with ACSS2. In terms of processing, phosphorylation at Ser-211 by MTOR via non-canonical mTORC1 pathway regulates its subcellular location and activity. When nutrients are present, phosphorylation by MTOR promotes association with 14-3-3/YWHA adapters and retention in the cytosol. Inhibition of mTORC1, starvation and lysosomal disruption, promotes dephosphorylation by calcineurin PPP3CB and translocation to the nucleus. Dephosphorylated by calcineurin PPP3CB in response to lysosomal Ca(2+) release. IRGM promotes dephosphorylation by calcineurin PPP3CB, resulting in TFEB nuclear translocation and stimulation of lysosomal biogenesis. Dephosphorylated by phosphatase PPP3CA following Coxsackievirus B3 infection, leading to nuclear translocation. Exported from the nucleus in a mTORC1-dependent manner in response to nutrient availability. Post-translationally, alkylated via a non-enzymatic covalent modification. Itaconate, an anti-inflammatory metabolite generated in response to lipopolysaccharide, alkylates Cys-212, preventing association with 14-3-3/YWHA adapters, thereby promoting nuclear translocation and activity. Sumoylated; does not affect dimerization with MITF. In terms of processing, (Microbial infection) Cleavage by Coxsackievirus B3 protease 3C after site Gln-60. This non-phosphorylated cleavage product retains its ability to interact with TFEB, TFE3 or MITF and presents impaired transcriptional activity, resulting in disruption of lysosomal functions and increased viral infection.

It is found in the nucleus. The protein resides in the cytoplasm. Its subcellular location is the cytosol. The protein localises to the lysosome membrane. Its activity is regulated as follows. Inhibited by eltrombopag drug, which binds to the bHLH domain and disrupts DNA-binding. Transcription factor that acts as a master regulator of lysosomal biogenesis, autophagy, lysosomal exocytosis, lipid catabolism, energy metabolism and immune response. Specifically recognizes and binds E-box sequences (5'-CANNTG-3'); efficient DNA-binding requires dimerization with itself or with another MiT/TFE family member such as TFE3 or MITF. Involved in the cellular response to amino acid availability by acting downstream of MTOR: in the presence of nutrients, TFEB phosphorylation by MTOR promotes its cytosolic retention and subsequent inactivation. Upon starvation or lysosomal stress, inhibition of MTOR induces TFEB dephosphorylation, resulting in nuclear localization and transcription factor activity. Specifically recognizes and binds the CLEAR-box sequence (5'-GTCACGTGAC-3') present in the regulatory region of many lysosomal genes, leading to activate their expression, thereby playing a central role in expression of lysosomal genes. Regulates lysosomal positioning in response to nutrient deprivation by promoting the expression of PIP4P1. Acts as a positive regulator of autophagy by promoting expression of genes involved in autophagy. In association with TFE3, activates the expression of CD40L in T-cells, thereby playing a role in T-cell-dependent antibody responses in activated CD4(+) T-cells and thymus-dependent humoral immunity. Specifically recognizes the gamma-E3 box, a subset of E-boxes, present in the heavy-chain immunoglobulin enhancer. Plays a role in the signal transduction processes required for normal vascularization of the placenta. Involved in the immune response to infection by the bacteria S.aureus, S.typhimurium or S.enterica: infection promotes itaconate production, leading to alkylation, resulting in nuclear localization and transcription factor activity. Itaconate-mediated alkylation activates TFEB-dependent lysosomal biogenesis, facilitating the bacteria clearance during the antibacterial innate immune response. In association with ACSS2, promotes the expression of genes involved in lysosome biogenesis and both autophagy upon glucose deprivation. The chain is Transcription factor EB from Homo sapiens (Human).